The following is a 333-amino-acid chain: Probable tRNA pseudouridine synthase B (333 aa).

Positions 1–14 are enriched in basic and acidic residues; the sequence is MKCPSREVFSKFEE. Residues 1-27 are disordered; the sequence is MKCPSREVFSKFEESTNPQWGKPPSQR. Residue Asp71 is the Nucleophile of the active site. The PUA domain occupies 238–313; the sequence is LPKIWVRDSA…LVARTDRVVM (76 aa).

Belongs to the pseudouridine synthase TruB family. Type 2 subfamily.

The catalysed reaction is uridine(55) in tRNA = pseudouridine(55) in tRNA. Could be responsible for synthesis of pseudouridine from uracil-55 in the psi GC loop of transfer RNAs. The polypeptide is Probable tRNA pseudouridine synthase B (Pyrobaculum aerophilum (strain ATCC 51768 / DSM 7523 / JCM 9630 / CIP 104966 / NBRC 100827 / IM2)).